We begin with the raw amino-acid sequence, 242 residues long: Murein peptide amidase A (242 aa).

Residues 1–234 form the Peptidase M14 domain; sequence MTVTRPRAER…FAMANLLRWH (234 aa). Positions 49, 52, and 157 each coordinate Zn(2+). Glutamate 210 functions as the Proton donor/acceptor in the catalytic mechanism.

This sequence belongs to the peptidase M14 family. As to quaternary structure, homodimer. Zn(2+) serves as cofactor.

The protein resides in the cytoplasm. The enzyme catalyses L-alanyl-gamma-D-glutamyl-meso-2,6-diaminopimelate + H2O = L-alanyl-D-glutamate + meso-2,6-diaminopimelate. The protein operates within cell wall degradation; peptidoglycan degradation. Its function is as follows. Involved in muropeptide degradation. Catalyzes the hydrolysis of the gamma-D-glutamyl-diaminopimelic acid (gamma-D-Glu-Dap) amide bond in the murein tripeptide L-alanyl-gamma-D-glutamyl-meso-diaminopimelic acid, leading to the formation of L-Ala-gamma-D-Glu and Dap. In Escherichia coli O157:H7, this protein is Murein peptide amidase A.